The primary structure comprises 428 residues: Histidinol dehydrogenase homolog (428 aa).

The Zn(2+) site is built by glutamine 250 and histidine 253. Active-site proton acceptor residues include glutamate 320 and histidine 321. Zn(2+) is bound by residues aspartate 354 and histidine 413.

Belongs to the histidinol dehydrogenase family. It depends on Zn(2+) as a cofactor.

The protein is Histidinol dehydrogenase homolog of Pelagibacter ubique (strain HTCC1062).